A 203-amino-acid chain; its full sequence is Large ribosomal subunit protein bL25 (203 aa).

Belongs to the bacterial ribosomal protein bL25 family. CTC subfamily. In terms of assembly, part of the 50S ribosomal subunit; part of the 5S rRNA/L5/L18/L25 subcomplex. Contacts the 5S rRNA. Binds to the 5S rRNA independently of L5 and L18.

This is one of the proteins that binds to the 5S RNA in the ribosome where it forms part of the central protuberance. This Rickettsia africae (strain ESF-5) protein is Large ribosomal subunit protein bL25.